Here is a 248-residue protein sequence, read N- to C-terminus: MSDQPDLFGTPTGAKAPHAIMPAGLPASWKEALAEEFAAPYFHALKDFLVEERRTHTVYPPAADVFNALRYTPLENVKVMILGQDPYHGPGQAHGLSFSVRPGVRIPPSLKNIYKELQSDIPGFTPPRHGYLKAWAEQGVLLLNAVLTVRAGEANSHAGKGWESFTDAVIRAVNNRPQRVVFVLWGAYARKKARLITAPHHVIIESAHPSPLSVTRFMGTRPFSRVNAALEEAGEAPIDWQLPAQVEE.

Catalysis depends on Asp-85, which acts as the Proton acceptor.

The protein belongs to the uracil-DNA glycosylase (UDG) superfamily. UNG family.

Its subcellular location is the cytoplasm. The enzyme catalyses Hydrolyzes single-stranded DNA or mismatched double-stranded DNA and polynucleotides, releasing free uracil.. Excises uracil residues from the DNA which can arise as a result of misincorporation of dUMP residues by DNA polymerase or due to deamination of cytosine. The protein is Uracil-DNA glycosylase of Deinococcus deserti (strain DSM 17065 / CIP 109153 / LMG 22923 / VCD115).